A 72-amino-acid chain; its full sequence is Translational regulator CsrA (72 aa).

It belongs to the CsrA/RsmA family. In terms of assembly, homodimer; the beta-strands of each monomer intercalate to form a hydrophobic core, while the alpha-helices form wings that extend away from the core.

It localises to the cytoplasm. A translational regulator that binds mRNA to regulate translation initiation and/or mRNA stability. Usually binds in the 5'-UTR at or near the Shine-Dalgarno sequence preventing ribosome-binding, thus repressing translation. Its main target seems to be the major flagellin gene, while its function is anatagonized by FliW. This Clostridium botulinum (strain Okra / Type B1) protein is Translational regulator CsrA.